A 300-amino-acid chain; its full sequence is Solute carrier family 25 member 35 (300 aa).

Solcar repeat units lie at residues 1-90, 100-193, and 203-294; these read MDFL…AEAG, HSPA…TKDL, and QSWK…LRSL. The next 6 membrane-spanning stretches (helical) occupy residues 38-58, 59-79, 91-119, 169-190, 205-225, and 277-300; these read TYQR…KVDG, LAAL…MNGI, GYLH…GAYL, ALGG…FSST, WKLA…AMAP, and LGPH…TDTK.

Belongs to the mitochondrial carrier (TC 2.A.29) family.

It is found in the mitochondrion inner membrane. It catalyses the reaction a dicarboxylate(in) + sulfate(out) = a dicarboxylate(out) + sulfate(in). Putative antiporter that exchanges dicarboxylates and sulfur oxoanions across the inner membrane of mitochondria. This is Solute carrier family 25 member 35 (SLC25A35) from Homo sapiens (Human).